Consider the following 652-residue polypeptide: Ethylmalonyl-CoA mutase (652 aa).

A B12-binding domain is found at 519-647 (PLKFVVGKPG…MDIVGLVDRT (129 aa)). His532 lines the adenosylcob(III)alamin pocket.

It belongs to the methylmalonyl-CoA mutase family. In terms of assembly, homodimer. It depends on adenosylcob(III)alamin as a cofactor.

The enzyme catalyses (2R)-ethylmalonyl-CoA = (2S)-methylsuccinyl-CoA. Its function is as follows. Radical enzyme that catalyzes the transformation of (2R)-ethylmalonyl-CoA to (2S)-methylsuccinyl-CoA. Is involved in the ethylmalonyl-CoA pathway for acetyl-CoA assimilation required for R.sphaeroides growth on acetate as sole carbon source. Is highly specific for its substrate, ethylmalonyl-CoA, and accepts methylmalonyl-CoA only at 0.2% relative activity. The polypeptide is Ethylmalonyl-CoA mutase (Cereibacter sphaeroides (strain ATCC 17023 / DSM 158 / JCM 6121 / CCUG 31486 / LMG 2827 / NBRC 12203 / NCIMB 8253 / ATH 2.4.1.) (Rhodobacter sphaeroides)).